The sequence spans 269 residues: MINAQTQLYGVIGFPVKHSLSPVFQNALIRYAGLNAVYLAFEINPEELKKAFEGFKALKVKGINVTVPFKEEIIPLLDYVEDTAKEIGAVNTVKFENGKAYGYNTDWIGFLKSLKSLIPEVKEKSILVLGAGGASRAVIYALVKEGAKVFLWNRTKEKAIKLAQKFPLEVVNSPEEVIDKVQVIVNTTSVGLKDKDPEIFNYDLIKKDHVVVDIIYKETKLLKKAKEKGAKLFDGLPMLLWQGIEAFKIWNGCEVPYSVAERSVRDLRG.

Shikimate-binding positions include 19–21 (SLS) and Thr66. Residue Lys70 is the Proton acceptor of the active site. Residue Asp82 participates in NADP(+) binding. Shikimate contacts are provided by Asn91 and Asp106. NADP(+) contacts are provided by residues 130-134 (GAGGA), 153-158 (NRTKEK), and Ile214. Tyr216 contributes to the shikimate binding site. NADP(+) is bound at residue Gly235. Residue Gln242 participates in shikimate binding.

Belongs to the shikimate dehydrogenase family. In terms of assembly, homodimer.

The enzyme catalyses shikimate + NADP(+) = 3-dehydroshikimate + NADPH + H(+). The protein operates within metabolic intermediate biosynthesis; chorismate biosynthesis; chorismate from D-erythrose 4-phosphate and phosphoenolpyruvate: step 4/7. Involved in the biosynthesis of the chorismate, which leads to the biosynthesis of aromatic amino acids. Catalyzes the reversible NADPH linked reduction of 3-dehydroshikimate (DHSA) to yield shikimate (SA). In Aquifex aeolicus (strain VF5), this protein is Shikimate dehydrogenase (NADP(+)).